Here is a 225-residue protein sequence, read N- to C-terminus: Ribosomal RNA large subunit methyltransferase E (225 aa).

Residues Gly76, Trp78, Asp99, Asp115, and Asp139 each contribute to the S-adenosyl-L-methionine site. Lys179 functions as the Proton acceptor in the catalytic mechanism.

This sequence belongs to the class I-like SAM-binding methyltransferase superfamily. RNA methyltransferase RlmE family.

It is found in the cytoplasm. The catalysed reaction is uridine(2552) in 23S rRNA + S-adenosyl-L-methionine = 2'-O-methyluridine(2552) in 23S rRNA + S-adenosyl-L-homocysteine + H(+). In terms of biological role, specifically methylates the uridine in position 2552 of 23S rRNA at the 2'-O position of the ribose in the fully assembled 50S ribosomal subunit. The chain is Ribosomal RNA large subunit methyltransferase E from Afipia carboxidovorans (strain ATCC 49405 / DSM 1227 / KCTC 32145 / OM5) (Oligotropha carboxidovorans).